The sequence spans 338 residues: Transcription factor AP-4 (338 aa).

A bHLH domain is found at 48–99; that stretch reads IRREIANSNERRRMQSINAGFQSLKTLIPHTDGEKLSKAAILQQTAEYIFSL. A leucine-zipper 1 region spans residues 100–120; that stretch reads EQEKTRLLQQNTQLKRFIQEL. Positions 118–141 are disordered; sequence QELSGSSPKRRRAEDKDEGIGSPD. Serine 123, serine 124, and serine 139 each carry phosphoserine. Residue lysine 147 forms a Glycyl lysine isopeptide (Lys-Gly) (interchain with G-Cter in SUMO2) linkage. A leucine-zipper 2 region spans residues 151-179; sequence LRREMIELRQQLDKERSVRMMLEEQVRSL. Residues lysine 187, lysine 189, and lysine 285 each participate in a glycyl lysine isopeptide (Lys-Gly) (interchain with G-Cter in SUMO2) cross-link. Positions 283 to 294 are enriched in basic and acidic residues; that stretch reads QEKQELEEEQRR. The segment at 283-338 is disordered; that stretch reads QEKQELEEEQRRAVIVKPVRSCPEAPTSDTASDSEASDSDAMDQSREEPSGDGELP.

Efficient DNA binding requires dimerization with another bHLH protein. Homodimer.

The protein resides in the nucleus. In terms of biological role, transcription factor that activates both viral and cellular genes by binding to the symmetrical DNA sequence 5'-CAGCTG-3'. The sequence is that of Transcription factor AP-4 (TFAP4) from Homo sapiens (Human).